We begin with the raw amino-acid sequence, 106 residues long: Protein yippee-like At4g27745 (106 aa).

One can recognise a Yippee domain in the interval 8–105; that stretch reads RLYSCCNCRN…FEKAKIVKED (98 aa). Zn(2+)-binding residues include C12, C15, C68, and C71.

The protein belongs to the yippee family.

The protein is Protein yippee-like At4g27745 of Arabidopsis thaliana (Mouse-ear cress).